The following is a 31-amino-acid chain: Cyclotide mden-J (31 aa).

Positions 1-31 (GSIPCGESCVYIPCISSIVGCACKSKVCYKN) form a cross-link, cyclopeptide (Gly-Asn). 3 cysteine pairs are disulfide-bonded: cysteine 5–cysteine 21, cysteine 9–cysteine 23, and cysteine 14–cysteine 28.

It belongs to the cyclotide family. Bracelet subfamily. In terms of processing, this is a cyclic peptide.

In terms of biological role, probably participates in a plant defense mechanism. The sequence is that of Cyclotide mden-J from Melicytus dentatus (Tree violet).